The primary structure comprises 193 residues: Ion-translocating oxidoreductase complex subunit A (193 aa).

A run of 6 helical transmembrane segments spans residues Leu-5–Leu-25, Ile-39–Met-59, Phe-62–Ala-82, Leu-102–Leu-122, Ala-134–Ile-154, and Ser-171–Val-191.

Belongs to the NqrDE/RnfAE family. In terms of assembly, the complex is composed of six subunits: RnfA, RnfB, RnfC, RnfD, RnfE and RnfG.

Its subcellular location is the cell inner membrane. Functionally, part of a membrane-bound complex that couples electron transfer with translocation of ions across the membrane. The protein is Ion-translocating oxidoreductase complex subunit A of Proteus mirabilis (strain HI4320).